The chain runs to 103 residues: Histone H4 (103 aa).

Residues 1–32 (MNTQSIGAKGKSKAAKGIAKRHRKQSSLSDSI) are disordered. Residues 10-25 (GKSKAAKGIAKRHRKQ) are compositionally biased toward basic residues. K16 carries the N6-acetyl-N6-methyllysine; alternate modification. K16 is subject to N6-methyllysine; alternate. Residues 20 to 24 (KRHRK) mediate DNA binding. K94 carries the post-translational modification N6-glutaryllysine.

Belongs to the histone H4 family. The nucleosome is a histone octamer containing two molecules each of H2A, H2B, H3 and H4 assembled in one H3-H4 heterotetramer and two H2A-H2B heterodimers. The octamer wraps approximately 147 bp of DNA. Glutarylation at Lys-94 (H4K91glu) destabilizes nucleosomes by promoting dissociation of the H2A-H2B dimers from nucleosomes.

The protein resides in the nucleus. Its subcellular location is the chromosome. Functionally, core component of nucleosome. Nucleosomes wrap and compact DNA into chromatin, limiting DNA accessibility to the cellular machineries which require DNA as a template. Histones thereby play a central role in transcription regulation, DNA repair, DNA replication and chromosomal stability. DNA accessibility is regulated via a complex set of post-translational modifications of histones, also called histone code, and nucleosome remodeling. This Encephalitozoon cuniculi (strain GB-M1) (Microsporidian parasite) protein is Histone H4 (HHF1).